We begin with the raw amino-acid sequence, 213 residues long: Phosphatidylserine decarboxylase proenzyme (213 aa).

The active-site Schiff-base intermediate with substrate; via pyruvic acid is Ser180. Position 180 is a pyruvic acid (Ser); by autocatalysis (Ser180).

It belongs to the phosphatidylserine decarboxylase family. PSD-A subfamily. In terms of assembly, heterodimer of a large membrane-associated beta subunit and a small pyruvoyl-containing alpha subunit. Requires pyruvate as cofactor. Is synthesized initially as an inactive proenzyme. Formation of the active enzyme involves a self-maturation process in which the active site pyruvoyl group is generated from an internal serine residue via an autocatalytic post-translational modification. Two non-identical subunits are generated from the proenzyme in this reaction, and the pyruvate is formed at the N-terminus of the alpha chain, which is derived from the carboxyl end of the proenzyme. The post-translation cleavage follows an unusual pathway, termed non-hydrolytic serinolysis, in which the side chain hydroxyl group of the serine supplies its oxygen atom to form the C-terminus of the beta chain, while the remainder of the serine residue undergoes an oxidative deamination to produce ammonia and the pyruvoyl prosthetic group on the alpha chain.

The protein resides in the cell membrane. It catalyses the reaction a 1,2-diacyl-sn-glycero-3-phospho-L-serine + H(+) = a 1,2-diacyl-sn-glycero-3-phosphoethanolamine + CO2. The protein operates within phospholipid metabolism; phosphatidylethanolamine biosynthesis; phosphatidylethanolamine from CDP-diacylglycerol: step 2/2. Functionally, catalyzes the formation of phosphatidylethanolamine (PtdEtn) from phosphatidylserine (PtdSer). The polypeptide is Phosphatidylserine decarboxylase proenzyme (Carboxydothermus hydrogenoformans (strain ATCC BAA-161 / DSM 6008 / Z-2901)).